Reading from the N-terminus, the 782-residue chain is LINE-1 type transposase domain-containing protein 1 (782 aa).

Disordered regions lie at residues 1-30 (MSGV…TATS), 90-200 (QEGD…GGAG), and 338-397 (NKGT…SAEE). Composition is skewed to basic and acidic residues over residues 11-27 (LQKE…ERKT) and 95-107 (ISER…KVEE). Position 136 is a phosphoserine (Ser136). Composition is skewed to basic and acidic residues over residues 143-158 (SLER…HGRC) and 183-194 (EENRLKAPKESP). The segment covering 347 to 396 (GEEEEISETQGEETSEGETSELGEEEGSESEEEEESSESEEEEESSESAE) has biased composition (acidic residues). Residues Ser407, Ser409, Ser442, Ser478, Ser490, Ser559, and Ser567 each carry the phosphoserine modification.

It belongs to the transposase 22 family.

This chain is LINE-1 type transposase domain-containing protein 1 (L1td1), found in Mus musculus (Mouse).